The following is a 1218-amino-acid chain: ATP-dependent helicase/deoxyribonuclease subunit B (1218 aa).

The region spanning 1–279 is the UvrD-like helicase ATP-binding domain; the sequence is MRFIVGRAGT…VFLTETHRFE (279 aa). 6–13 contacts ATP; it reads GRAGTGKS. Positions 281–588 constitute a UvrD-like helicase C-terminal domain; it reads AGLKHLERFY…LVGSLDRSRN (308 aa). Residue Cys786 participates in [4Fe-4S] cluster binding. A disordered region spans residues 987-1006; it reads LAEGSKGSEGSEGSEDSEDS. 3 residues coordinate [4Fe-4S] cluster: Cys1126, Cys1129, and Cys1135. Residues 1160-1169 show a composition bias toward polar residues; the sequence is RVQSQDSEQY. The disordered stretch occupies residues 1160-1218; the sequence is RVQSQDSEQYPEQHPPTSVPGETSRRALQKDGGNSPRGQELIWLGEDEAGAGKEDDGHE. Over residues 1209–1218 the composition is skewed to basic and acidic residues; that stretch reads GAGKEDDGHE.

The protein belongs to the helicase family. AddB/RexB type 1 subfamily. Heterodimer of AddA and AddB. Requires Mg(2+) as cofactor. The cofactor is [4Fe-4S] cluster.

Its function is as follows. The heterodimer acts as both an ATP-dependent DNA helicase and an ATP-dependent, dual-direction single-stranded exonuclease. Recognizes the chi site generating a DNA molecule suitable for the initiation of homologous recombination. The AddB subunit has 5' -&gt; 3' nuclease activity but not helicase activity. The protein is ATP-dependent helicase/deoxyribonuclease subunit B of Desulfitobacterium hafniense (strain DSM 10664 / DCB-2).